A 457-amino-acid chain; its full sequence is Cysteine--tRNA ligase (457 aa).

Cys-28 contributes to the Zn(2+) binding site. The short motif at 30 to 40 is the 'HIGH' region element; the sequence is ITVYDLCHIGH. 3 residues coordinate Zn(2+): Cys-209, His-234, and Glu-238. Residues 266–270 carry the 'KMSKS' region motif; it reads KMSKS. Lys-269 is a binding site for ATP.

Belongs to the class-I aminoacyl-tRNA synthetase family. Monomer. Zn(2+) is required as a cofactor.

Its subcellular location is the cytoplasm. The catalysed reaction is tRNA(Cys) + L-cysteine + ATP = L-cysteinyl-tRNA(Cys) + AMP + diphosphate. The sequence is that of Cysteine--tRNA ligase from Sodalis glossinidius (strain morsitans).